The sequence spans 239 residues: Small ribosomal subunit protein uS2 (239 aa).

Belongs to the universal ribosomal protein uS2 family.

In Francisella tularensis subsp. novicida (strain U112), this protein is Small ribosomal subunit protein uS2.